The primary structure comprises 430 residues: Lipoyl synthase, chloroplastic (430 aa).

Over residues 1 to 16 (MRSLATLHQSPASCSR) the composition is skewed to polar residues. The transit peptide at 1-40 (MRSLATLHQSPASCSRSAPVAPCPARRANSSRRVARQGPR) directs the protein to the chloroplast. 2 disordered regions span residues 1–55 (MRSL…SEDV) and 85–119 (HLRS…SLGA). A compositionally biased stretch (low complexity) spans 91–119 (KSAAPVSPFAAPSPGSPSASSMLGPSLGA). The [4Fe-4S] cluster site is built by C155, C160, C166, C183, C187, C190, and S397. In terms of domain architecture, Radical SAM core spans 166–386 (CWNGELATAT…KFGQEEIGFR (221 aa)).

The protein belongs to the radical SAM superfamily. Lipoyl synthase family. The cofactor is [4Fe-4S] cluster.

It localises to the plastid. It is found in the chloroplast. The enzyme catalyses [[Fe-S] cluster scaffold protein carrying a second [4Fe-4S](2+) cluster] + N(6)-octanoyl-L-lysyl-[protein] + 2 oxidized [2Fe-2S]-[ferredoxin] + 2 S-adenosyl-L-methionine + 4 H(+) = [[Fe-S] cluster scaffold protein] + N(6)-[(R)-dihydrolipoyl]-L-lysyl-[protein] + 4 Fe(3+) + 2 hydrogen sulfide + 2 5'-deoxyadenosine + 2 L-methionine + 2 reduced [2Fe-2S]-[ferredoxin]. The protein operates within protein modification; protein lipoylation via endogenous pathway; protein N(6)-(lipoyl)lysine from octanoyl-[acyl-carrier-protein]: step 2/2. In terms of biological role, catalyzes the radical-mediated insertion of two sulfur atoms into the C-6 and C-8 positions of the octanoyl moiety bound to the lipoyl domains of lipoate-dependent enzymes, thereby converting the octanoylated domains into lipoylated derivatives. The chain is Lipoyl synthase, chloroplastic from Chlamydomonas reinhardtii (Chlamydomonas smithii).